The sequence spans 959 residues: Nucleoporin NUP100/NSP100 (959 aa).

A disordered region spans residues 1-104; that stretch reads MFGNNRPMFG…NSSNASNGNT (104 aa). FG repeat units lie at residues 2–3, 9–10, and Gly17; these read FG. The span at 12-36 shows a compositional bias: polar residues; sequence SNLSFGSNTSSFGGQQSQQPNSLFG. Residues 21–24 form an SLFG 1; approximate repeat; the sequence is SSFG. The stretch at 33 to 36 is one SLFG 2 repeat; the sequence is SLFG. Residues 37 to 48 are compositionally biased toward low complexity; that stretch reads NSNNNNNSTSNN. One copy of the SLFG 3; approximate repeat lies at 51 to 54; sequence SGFG. Composition is skewed to low complexity over residues 56 to 81 and 92 to 104; these read FTSA…AFGQ and GSLN…NGNT. An SLFG 4 repeat occupies 66 to 69; sequence SLFG. Residues 77 to 80 form a GLFG 1; approximate repeat; that stretch reads GAFG. The SLFG 5; approximate repeat unit spans residues 89–92; the sequence is SPFG. The FG 4 repeat unit spans residues 105–106; it reads FG. Residues 112–115 form a GLFG 2; approximate repeat; sequence GSFG. A compositionally biased stretch (low complexity) spans 121–136; the sequence is AFNNNSNSTNSPFGFN. The disordered stretch occupies residues 121–172; that stretch reads AFNNNSNSTNSPFGFNKPNTGGTLFGSQNNNSAGTSSLFGGQSTSTTGTFGN. The SLFG 6; approximate repeat unit spans residues 131–134; it reads SPFG. Residues 137–153 are compositionally biased toward polar residues; sequence KPNTGGTLFGSQNNNSA. The FG 5 repeat unit spans residues 145–146; the sequence is FG. A compositionally biased stretch (low complexity) spans 154 to 172; the sequence is GTSSLFGGQSTSTTGTFGN. Residues 157 to 160 form an SLFG 7 repeat; the sequence is SLFG. The GLFG 3; approximate repeat unit spans residues 168 to 171; that stretch reads GTFG. The SLFG 8; approximate repeat unit spans residues 175 to 178; the sequence is SSFG. The FG 6 repeat unit spans residues 189 to 190; the sequence is FG. Residues 190–394 are disordered; the sequence is GAGNNSQSNT…NNQQQQSTGL (205 aa). Positions 192 to 245 are enriched in polar residues; sequence GNNSQSNTTGSLFGNQQSSAFGTNNQQGSLFGQQSQNTNNAFGNQNQLGGSSFG. One copy of the SLFG 9 repeat lies at 202-205; sequence SLFG. Residues 210–213 form an SLFG 10; approximate repeat; the sequence is SAFG. An SLFG 11 repeat occupies 220-223; that stretch reads SLFG. An FG 7 repeat occupies 233-234; it reads FG. The stretch at 242–245 is one SLFG 12; approximate repeat; the sequence is SSFG. An SLFG 13 repeat occupies 253 to 256; the sequence is SLFG. Low complexity predominate over residues 259–293; the sequence is NNTLGNTTNNRNGLFGQMNSSNQGSSNSGLFGQNS. GLFG repeat units follow at residues 271–274 and 287–290; these read GLFG. Over residues 294–303 the composition is skewed to polar residues; that stretch reads MNSSTQGVFG. A GLFG 6; approximate repeat occupies 300-303; that stretch reads GVFG. The span at 304-317 shows a compositional bias: low complexity; the sequence is QNNNQMQINGNNNN. One copy of the SLFG 14 repeat lies at 318–321; that stretch reads SLFG. GLFG repeat units lie at residues 333-336, 345-348, 358-361, 379-382, and 393-396; these read GLFG. A compositionally biased stretch (low complexity) spans 336–352; it reads GQNNQQQGSGLFGQNSQ. Over residues 353–377 the composition is skewed to polar residues; the sequence is TSGSSGLFGQNNQKQPNTFTQSNTG. 3 SLFG repeats span residues 405–408, 417–420, and 436–439; these read SLFG. An FG 8 repeat occupies 448–449; that stretch reads FG. One copy of the SLFG 18 repeat lies at 462-465; the sequence is SLFG. The SLFG 19; approximate repeat unit spans residues 474-477; that stretch reads SLFG. GLFG repeat units lie at residues 490 to 493, 506 to 509, and 523 to 526; these read GLFG. The stretch at 542–543 is one FG 9 repeat; sequence FG. A GLFG 15 repeat occupies 550-553; that stretch reads GLFG. An FG 10 repeat occupies 569 to 570; the sequence is FG. Disordered stretches follow at residues 672–697 and 745–794; these read TLER…LNSN and DDQA…PMIE. Over residues 679-697 the composition is skewed to polar residues; sequence GSSTSNSITDPESSYLNSN. A compositionally biased stretch (basic and acidic residues) spans 757-775; sequence LTEKAHSPQTDLKDDHDES. A phosphoserine mark is found at Ser763 and Ser783. Polar residues predominate over residues 777-790; the sequence is PDPQSKSPNGSTSI. The region spanning 814 to 956 is the Peptidase S59 domain; it reads KNNYYISPSI…GTYSYTIDHP (143 aa). A nucleoporin RNA-binding motif (NRM) region spans residues 816-955; sequence NYYISPSIET…TGTYSYTIDH (140 aa).

The protein belongs to the nucleoporin GLFG family. In terms of assembly, component of the nuclear pore complex (NPC). NPC constitutes the exclusive means of nucleocytoplasmic transport. NPCs allow the passive diffusion of ions and small molecules and the active, nuclear transport receptor-mediated bidirectional transport of macromolecules such as proteins, RNAs, ribonucleoparticles (RNPs), and ribosomal subunits across the nuclear envelope. Due to its 8-fold rotational symmetry, all subunits are present with 8 copies or multiples thereof. Through its FG repeats NUP100 interacts with numerous karyopherins including KAP95, and MEX67.

Its subcellular location is the nucleus. It localises to the nuclear pore complex. It is found in the nucleus membrane. Functions as a component of the nuclear pore complex (NPC). NPC components, collectively referred to as nucleoporins (NUPs), can play the role of both NPC structural components and of docking or interaction partners for transiently associated nuclear transport factors. Active directional transport is assured by both, a Phe-Gly (FG) repeat affinity gradient for these transport factors across the NPC and a transport cofactor concentration gradient across the nuclear envelope (GSP1 and GSP2 GTPases associated predominantly with GTP in the nucleus, with GDP in the cytoplasm). NUP100 plays an important role in several nuclear export and import pathways including poly(A)+ RNA and protein transport. This is Nucleoporin NUP100/NSP100 (NUP100) from Saccharomyces cerevisiae (strain ATCC 204508 / S288c) (Baker's yeast).